Reading from the N-terminus, the 173-residue chain is Shikimate kinase 1 (173 aa).

14 to 19 is an ATP binding site; the sequence is GAGKST. Serine 18 lines the Mg(2+) pocket. 3 residues coordinate substrate: aspartate 36, arginine 60, and glycine 82. An ATP-binding site is contributed by arginine 120. Residue arginine 140 participates in substrate binding. ATP is bound at residue glutamine 157.

It belongs to the shikimate kinase family. As to quaternary structure, monomer. Mg(2+) serves as cofactor.

Its subcellular location is the cytoplasm. It carries out the reaction shikimate + ATP = 3-phosphoshikimate + ADP + H(+). It participates in metabolic intermediate biosynthesis; chorismate biosynthesis; chorismate from D-erythrose 4-phosphate and phosphoenolpyruvate: step 5/7. Functionally, catalyzes the specific phosphorylation of the 3-hydroxyl group of shikimic acid using ATP as a cosubstrate. In Serratia proteamaculans (strain 568), this protein is Shikimate kinase 1.